Here is a 641-residue protein sequence, read N- to C-terminus: Chaperone protein DnaK (641 aa).

Phosphothreonine; by autocatalysis is present on Thr-200. Residues 605 to 623 are compositionally biased toward low complexity; the sequence is AAEQGGSADAASGNAQASK. The tract at residues 605–628 is disordered; that stretch reads AAEQGGSADAASGNAQASKAADDV.

This sequence belongs to the heat shock protein 70 family.

In terms of biological role, acts as a chaperone. The sequence is that of Chaperone protein DnaK from Xanthomonas oryzae pv. oryzae (strain KACC10331 / KXO85).